Here is a 379-residue protein sequence, read N- to C-terminus: RIB43A-like with coiled-coils protein 1 (379 aa).

Positions 1–21 (MYNINQSTDTKEAAAIEARRN) are disordered. Basic and acidic residues predominate over residues 9–21 (DTKEAAAIEARRN). Coiled-coil stretches lie at residues 85–111 (ADRT…GREF), 161–241 (RYNL…KANL), and 280–304 (EQRA…QAEK).

It belongs to the RIB43A family. As to quaternary structure, microtubule inner protein component of sperm flagellar doublet microtubules.

Its subcellular location is the cytoplasm. It localises to the cytoskeleton. The protein resides in the flagellum axoneme. The chain is RIB43A-like with coiled-coils protein 1 (RIBC1) from Macaca fascicularis (Crab-eating macaque).